Here is a 107-residue protein sequence, read N- to C-terminus: Quaternary ammonium compound-resistance protein QacC (107 aa).

3 helical membrane-spanning segments follow: residues 26–46, 57–77, and 84–104; these read FSKF…FYFL, ITYA…SIII, and LITI…NIFG.

This sequence belongs to the drug/metabolite transporter (DMT) superfamily. Small multidrug resistance (SMR) (TC 2.A.7.1) family.

It localises to the cell membrane. In terms of biological role, multidrug exporter. Is implicated for the resistance to bacteriocidal quaternary ammonium compounds. The protein is Quaternary ammonium compound-resistance protein QacC of Staphylococcus sp. (strain ST827).